The sequence spans 755 residues: Catalase-peroxidase (755 aa).

Positions 91–245 (WHSAGTYRTA…LAAVQMGLIY (155 aa)) form a cross-link, tryptophyl-tyrosyl-methioninium (Trp-Tyr) (with M-271). His92 acts as the Proton acceptor in catalysis. The interval 193-229 (DNRYGKDPESMQPPGEGTLVAEPAEHGNEESRTNQGE) is disordered. Residues 215-224 (PAEHGNEESR) show a composition bias toward basic and acidic residues. Positions 245–271 (YVNPEGPEGNPDPVASAKDIRETFGRM) form a cross-link, tryptophyl-tyrosyl-methioninium (Tyr-Met) (with W-91). His286 contacts heme.

Belongs to the peroxidase family. Peroxidase/catalase subfamily. As to quaternary structure, homodimer or homotetramer. Requires heme b as cofactor. Post-translationally, formation of the three residue Trp-Tyr-Met cross-link is important for the catalase, but not the peroxidase activity of the enzyme.

It carries out the reaction H2O2 + AH2 = A + 2 H2O. It catalyses the reaction 2 H2O2 = O2 + 2 H2O. Bifunctional enzyme with both catalase and broad-spectrum peroxidase activity. The protein is Catalase-peroxidase of Pseudomonas fluorescens (strain Pf0-1).